The primary structure comprises 149 residues: Large ribosomal subunit protein bL9 (149 aa).

This sequence belongs to the bacterial ribosomal protein bL9 family.

Its function is as follows. Binds to the 23S rRNA. The polypeptide is Large ribosomal subunit protein bL9 (Fervidobacterium nodosum (strain ATCC 35602 / DSM 5306 / Rt17-B1)).